The sequence spans 334 residues: Probable 3-hydroxyisobutyrate dehydrogenase-like 1, mitochondrial (334 aa).

A mitochondrion-targeting transit peptide spans 1–23 (MPLLLRRFPSPSVVSSFFLRRSM). The residue at position 24 (alanine 24) is an N-acetylalanine. NAD(+) is bound by residues 38 to 67 (TKIG…TVFN) and threonine 133. Lysine 207 is a catalytic residue. Position 275 (lysine 275) interacts with NAD(+).

It belongs to the HIBADH-related family. 3-hydroxyisobutyrate dehydrogenase subfamily.

The protein localises to the mitochondrion. It carries out the reaction 3-hydroxy-2-methylpropanoate + NAD(+) = 2-methyl-3-oxopropanoate + NADH + H(+). It participates in amino-acid degradation; L-valine degradation. The polypeptide is Probable 3-hydroxyisobutyrate dehydrogenase-like 1, mitochondrial (Arabidopsis thaliana (Mouse-ear cress)).